We begin with the raw amino-acid sequence, 548 residues long: Natural resistance-associated macrophage protein 1 (548 aa).

Positions Met-1–Gly-11 are enriched in polar residues. Residues Met-1–Glu-38 form a disordered region. Residues Met-1–Leu-55 are Cytoplasmic-facing. Residues Trp-56–Gly-73 traverse the membrane as a helical segment. Topologically, residues Asn-74 to Gly-82 are extracellular. Residues Ala-83–Leu-102 form a helical membrane-spanning segment. Over Cys-103–Glu-139 the chain is Cytoplasmic. A helical membrane pass occupies residues Leu-140–Leu-160. Residues Ser-161 to Arg-164 are Extracellular-facing. A helical membrane pass occupies residues Ile-165–Leu-184. At Asp-185 to Glu-193 the chain is on the cytoplasmic side. The helical transmembrane segment at Ala-194–Ala-214 threads the bilayer. The Extracellular segment spans residues Gln-215–Glu-237. The helical transmembrane segment at Leu-238–Leu-256 threads the bilayer. The Cytoplasmic portion of the chain corresponds to His-257 to Glu-284. A helical membrane pass occupies residues Ala-285–Gly-304. Topologically, residues Gln-305–Gly-346 are extracellular. The N-linked (GlcNAc...) asparagine glycan is linked to Asn-335. A helical membrane pass occupies residues Val-347–Leu-366. Topologically, residues Ala-367 to Arg-397 are cytoplasmic. The helical transmembrane segment at Val-398–Phe-415 threads the bilayer. Over Arg-416–Asp-426 the chain is Extracellular. A helical transmembrane segment spans residues Leu-427 to Thr-447. At Ser-448–Lys-463 the chain is on the cytoplasmic side. The chain crosses the membrane as a helical span at residues Val-464–Val-485. Over Pro-486–Tyr-493 the chain is Extracellular. A helical transmembrane segment spans residues Phe-494 to Trp-513. Over Thr-514 to Gly-548 the chain is Cytoplasmic.

This sequence belongs to the NRAMP family.

It localises to the late endosome membrane. The protein localises to the lysosome membrane. The enzyme catalyses Zn(2+)(in) + H(+)(out) = Zn(2+)(out) + H(+)(in). It catalyses the reaction Fe(2+)(in) + H(+)(out) = Fe(2+)(out) + H(+)(in). It carries out the reaction Mn(2+)(in) + H(+)(out) = Mn(2+)(out) + H(+)(in). Macrophage-specific antiporter that fluxes metal ions in either direction against a proton gradient. Localized to late endosomal lysosomal membranes, delivers bivalent cations from the cytosol into these acidic compartments where they may directly affect antimicrobial activity. Involved in iron metabolism and host natural resistance to infection with intracellular parasites. Pathogen resistance involves sequestration of Fe(2+) and Mn(2+), cofactors of both prokaryotic and eukaryotic catalases and superoxide dismutases, not only to protect the macrophage against its own generation of reactive oxygen species, but to deny the cations to the pathogen for synthesis of its protective enzymes. The sequence is that of Natural resistance-associated macrophage protein 1 (SLC11A1) from Bubalus bubalis (Domestic water buffalo).